A 127-amino-acid polypeptide reads, in one-letter code: Flagellar assembly factor FliW (127 aa).

The protein belongs to the FliW family. As to quaternary structure, interacts with translational regulator CsrA and flagellin(s).

It localises to the cytoplasm. Acts as an anti-CsrA protein, binds CsrA and prevents it from repressing translation of its target genes, one of which is flagellin. Binds to flagellin and participates in the assembly of the flagellum. This Campylobacter concisus (strain 13826) protein is Flagellar assembly factor FliW.